A 697-amino-acid polypeptide reads, in one-letter code: MSIPFGLDFGNNSSVLAVARNRGIDIVVNEVSNRSTPSLVGFGQKNRFLGEAGKNKQTSNIKNTVDNLKRIVGLDHAHSDFEEEAKFFSSKLVKMEDGKIGAQVRFAGEQQVFSATQIAAMFMNRAKTIVQDETKGKVTDVALAVPAWYNEAQRYAAADAARIAGLNPVRVVNDVTAAAVSYGVFKTDLPEGEEKPRRVAFVDIGHSSYTCSIGSFKKGELKILGTAYDKHFGGRNFDRAITEHFAEEFKGKYKIDIRENAKAYNRVMTAAEKLKKVLSANTAAPFNIESVMNDVDVSSQLTREELEELVAPLLKRVTEPVTKALAQAKLTPEDIDFVEIIGGTTRIPCLKNAISAAFNKPLSTTLNQDEAIAKGAAFICAIHSPTLKVRPFKFEDIHEYSVSYHWDQQVEDEDHLEVFPAGSSYPSTKLITLHRTGDFTMTAKYTNPEVLPAGMPEEIAKWEITGVKVPEGETSVPVKLKLRCDPSGFHIIENAYTVEDIKVKEQIPPAADAPEDAEPEYKEVTKTVKKDTLQIVAHTFALEEAVLNELIEKENELAAQDKLVAETEDRKNTLEEYVYTLRGKLDEEYAAFASDEEKTKLKDMLAKAEEWLYDEGYDSTKAKYIAKYEELASLGNVIRGRYMAKEEEKRQALRAKQEAAQMAEMAEKLAAQRAAEQKAQESKAESDKDAEGDIDLD.

Residues 664-674 are compositionally biased toward low complexity; that stretch reads EMAEKLAAQRA. Residues 664–697 form a disordered region; that stretch reads EMAEKLAAQRAAEQKAQESKAESDKDAEGDIDLD. Basic and acidic residues predominate over residues 675–691; that stretch reads AEQKAQESKAESDKDAE.

It belongs to the heat shock protein 70 family.

The protein resides in the cytoplasm. This Eremothecium gossypii (strain ATCC 10895 / CBS 109.51 / FGSC 9923 / NRRL Y-1056) (Yeast) protein is Heat shock protein homolog SSE1 (SSE1).